The primary structure comprises 49 residues: Protein OPG059 (49 aa).

Residue Met1 is a topological domain, virion surface. The helical transmembrane segment at 2–22 (VIGLVIFVSVAAAIVGVLSNV) threads the bilayer. At 23–49 (LDMLMYVEENNEEDARIKEEQELLLLY) the chain is on the intravirion side.

Belongs to the orthopoxvirus OPG058 family.

It is found in the virion membrane. The protein localises to the host membrane. In terms of biological role, may play a role in cell adhesion and is important for virus virulence in vivo, although it is not required for the virus life cycle in cell cultures. The polypeptide is Protein OPG059 (OPG059) (Vaccinia virus (strain Western Reserve) (VACV)).